A 516-amino-acid chain; its full sequence is Acetylcholine receptor subunit alpha-like (516 aa).

An N-terminal signal peptide occupies residues 1 to 21 (MRSVTKYYLHGVVLFATGCAG). The Extracellular portion of the chain corresponds to 22–243 (NPDAKRLYDD…ITMRRKTLFY (222 aa)). 2 N-linked (GlcNAc...) asparagine glycosylation sites follow: asparagine 45 and asparagine 132. 2 disulfides stabilise this stretch: cysteine 149-cysteine 163 and cysteine 222-cysteine 223. Asparagine 233 carries N-linked (GlcNAc...) asparagine glycosylation. 3 consecutive transmembrane segments (helical) span residues 244-264 (TVNLIIPCMGISFLTVLVFYL), 274-294 (LSISILLSLTVFFLLLAEIIP), and 306-326 (FVLFTMILDTFSICVTVVVLN). The Cytoplasmic portion of the chain corresponds to 327-465 (VHFRSPQTHT…WKYVAMVLDR (139 aa)). The chain crosses the membrane as a helical span at residues 466 to 486 (PFLWIFTLAVVVGSAGIILQA).

Belongs to the ligand-gated ion channel (TC 1.A.9) family. Acetylcholine receptor (TC 1.A.9.1) subfamily.

It is found in the postsynaptic cell membrane. The protein localises to the cell membrane. Its function is as follows. After binding acetylcholine, the AChR responds by an extensive change in conformation that affects all subunits and leads to opening of an ion-conducting channel across the plasma membrane. The polypeptide is Acetylcholine receptor subunit alpha-like (ARA1) (Manduca sexta (Tobacco hawkmoth)).